A 147-amino-acid polypeptide reads, in one-letter code: 3-dehydroquinate dehydratase (147 aa).

The Proton acceptor role is filled by Tyr22. Residues Asn74, His80, and Asp87 each coordinate substrate. His101 (proton donor) is an active-site residue. Residues 102–103 (IS) and Arg112 contribute to the substrate site.

The protein belongs to the type-II 3-dehydroquinase family. As to quaternary structure, homododecamer.

The enzyme catalyses 3-dehydroquinate = 3-dehydroshikimate + H2O. It participates in metabolic intermediate biosynthesis; chorismate biosynthesis; chorismate from D-erythrose 4-phosphate and phosphoenolpyruvate: step 3/7. Functionally, catalyzes a trans-dehydration via an enolate intermediate. This chain is 3-dehydroquinate dehydratase, found in Lachnospira eligens (strain ATCC 27750 / DSM 3376 / VPI C15-48 / C15-B4) (Eubacterium eligens).